Consider the following 391-residue polypeptide: Period circadian protein (391 aa).

Disordered regions lie at residues 27-121 (VTAP…PPVT), 163-188 (MLEYSGPGPGHGHGIKRGGSHSWEGE), 241-270 (GSSAGGNGSGTGNNNGNGNNNQPTTNQFTQ), and 328-357 (SPSGTSPNPNRPHKHAHVHSSSEKPSTSQA). Residues 93-114 (GTSGTGNSGDGGGGGGADGPGS) show a composition bias toward gly residues. Gly residues predominate over residues 241–255 (GSSAGGNGSGTGNNN).

In terms of assembly, forms a heterodimer with timeless (TIM); the complex then translocates into the nucleus. In terms of processing, phosphorylated with a circadian rhythmicity, probably by the double-time protein (dbt). Phosphorylation could be implicated in the stability of per monomer and in the formation of heterodimer per-tim.

It localises to the nucleus. It is found in the cytoplasm. Its subcellular location is the perinuclear region. Essential for biological clock functions. Determines the period length of circadian and ultradian rhythms; an increase in PER dosage leads to shortened circadian rhythms and a decrease leads to lengthened circadian rhythms. Essential for the circadian rhythmicity of locomotor activity, eclosion behavior, and for the rhythmic component of the male courtship song that originates in the thoracic nervous system. The biological cycle depends on the rhythmic formation and nuclear localization of the TIM-PER complex. Light induces the degradation of TIM, which promotes elimination of PER. Nuclear activity of the heterodimer coordinatively regulates PER and TIM transcription through a negative feedback loop. Behaves as a negative element in circadian transcriptional loop. Does not appear to bind DNA, suggesting indirect transcriptional inhibition. This Drosophila insularis (Fruit fly) protein is Period circadian protein (per).